Reading from the N-terminus, the 493-residue chain is Ketol-acid reductoisomerase (NADP(+)) (493 aa).

In terms of domain architecture, KARI N-terminal Rossmann spans 15–208; sequence AQLGKCRFMQ…GGDRAGVLES (194 aa). NADP(+) is bound by residues 45-48, Arg-68, Arg-76, Ser-78, and 108-110; these read CGAQ and DKQ. His-132 is a catalytic residue. Gly-158 is a binding site for NADP(+). KARI C-terminal knotted domains follow at residues 209–344 and 345–486; these read SFVA…NALA and FAGK…MKDM. Residues Asp-217, Glu-221, Glu-389, and Glu-393 each contribute to the Mg(2+) site. Residue Ser-414 participates in substrate binding.

This sequence belongs to the ketol-acid reductoisomerase family. The cofactor is Mg(2+).

The enzyme catalyses (2R)-2,3-dihydroxy-3-methylbutanoate + NADP(+) = (2S)-2-acetolactate + NADPH + H(+). The catalysed reaction is (2R,3R)-2,3-dihydroxy-3-methylpentanoate + NADP(+) = (S)-2-ethyl-2-hydroxy-3-oxobutanoate + NADPH + H(+). The protein operates within amino-acid biosynthesis; L-isoleucine biosynthesis; L-isoleucine from 2-oxobutanoate: step 2/4. It participates in amino-acid biosynthesis; L-valine biosynthesis; L-valine from pyruvate: step 2/4. Functionally, involved in the biosynthesis of branched-chain amino acids (BCAA). Catalyzes an alkyl-migration followed by a ketol-acid reduction of (S)-2-acetolactate (S2AL) to yield (R)-2,3-dihydroxy-isovalerate. In the isomerase reaction, S2AL is rearranged via a Mg-dependent methyl migration to produce 3-hydroxy-3-methyl-2-ketobutyrate (HMKB). In the reductase reaction, this 2-ketoacid undergoes a metal-dependent reduction by NADPH to yield (R)-2,3-dihydroxy-isovalerate. The polypeptide is Ketol-acid reductoisomerase (NADP(+)) (Aeromonas salmonicida (strain A449)).